A 288-amino-acid polypeptide reads, in one-letter code: ATP synthase gamma chain (288 aa).

Belongs to the ATPase gamma chain family. F-type ATPases have 2 components, CF(1) - the catalytic core - and CF(0) - the membrane proton channel. CF(1) has five subunits: alpha(3), beta(3), gamma(1), delta(1), epsilon(1). CF(0) has three main subunits: a, b and c.

The protein localises to the cell inner membrane. Produces ATP from ADP in the presence of a proton gradient across the membrane. The gamma chain is believed to be important in regulating ATPase activity and the flow of protons through the CF(0) complex. The protein is ATP synthase gamma chain of Trichlorobacter lovleyi (strain ATCC BAA-1151 / DSM 17278 / SZ) (Geobacter lovleyi).